The following is a 145-amino-acid chain: Small ribosomal subunit protein uS19 (145 aa).

The protein belongs to the universal ribosomal protein uS19 family. As to quaternary structure, component of the small ribosomal subunit.

Its subcellular location is the cytoplasm. Component of the small ribosomal subunit. The ribosome is a large ribonucleoprotein complex responsible for the synthesis of proteins in the cell. The sequence is that of Small ribosomal subunit protein uS19 (rps15) from Xenopus laevis (African clawed frog).